Consider the following 506-residue polypeptide: Maturase K (506 aa).

Belongs to the intron maturase 2 family. MatK subfamily.

It is found in the plastid. The protein resides in the chloroplast. Functionally, usually encoded in the trnK tRNA gene intron. Probably assists in splicing its own and other chloroplast group II introns. This Calluna vulgaris (Heather) protein is Maturase K.